Consider the following 790-residue polypeptide: Kinesin-like protein KIF9 (790 aa).

Positions 6-340 constitute a Kinesin motor domain; the sequence is KVQAFVRVRP…LRFASRMKLV (335 aa). Residues 12 to 14 and 93 to 100 each bind ATP; these read RVR and GQTGAGKT. Residues 342–442 adopt a coiled-coil conformation; that stretch reads TEPAINEKYD…EQEVESALRR (101 aa). Residues 482 to 521 are disordered; that stretch reads GVAPFSVKPGKKPKTKKTPKDQFSSSARKEGASSPVSGKD. The residue at position 530 (Thr530) is a Phosphothreonine. The tract at residues 547 to 577 is disordered; the sequence is RERETSSIEPLISDSPKEELRAPRPSTPPSR. A coiled-coil region spans residues 600-695; the sequence is KSILNERKKR…YCQRLVDQCR (96 aa).

The protein belongs to the TRAFAC class myosin-kinesin ATPase superfamily. Kinesin family. As to quaternary structure, interacts with HYDIN. In terms of tissue distribution, highly expressed in the testis (at protein level). Weakly expressed in the brain, thymus, lung and heart.

It localises to the cytoplasm. The protein resides in the cytoskeleton. The protein localises to the cell projection. It is found in the cilium. Its subcellular location is the flagellum. It localises to the flagellum axoneme. Functionally, essential for normal male fertility and for progressive motility of spermatozoa. In Mus musculus (Mouse), this protein is Kinesin-like protein KIF9 (Kif9).